Reading from the N-terminus, the 341-residue chain is Porin-like protein L (341 aa).

Positions 1–21 (MNKKLIALAVAAASISSVATA) are cleaved as a signal peptide.

Belongs to the Gram-negative porin family. In terms of assembly, homotrimer.

The protein resides in the cell outer membrane. Forms pores that allow passive diffusion of small molecules across the outer membrane. The chain is Porin-like protein L (ompL) from Photobacterium profundum (strain SS9).